Here is a 544-residue protein sequence, read N- to C-terminus: Chaperonin GroEL 2 (544 aa).

Residues 29 to 32 (TLGP), 86 to 90 (DGTTT), Gly-413, 479 to 481 (NAA), and Asp-495 contribute to the ATP site.

The protein belongs to the chaperonin (HSP60) family. Forms a cylinder of 14 subunits composed of two heptameric rings stacked back-to-back. Interacts with the co-chaperonin GroES.

The protein localises to the cytoplasm. It carries out the reaction ATP + H2O + a folded polypeptide = ADP + phosphate + an unfolded polypeptide.. In terms of biological role, together with its co-chaperonin GroES, plays an essential role in assisting protein folding. The GroEL-GroES system forms a nano-cage that allows encapsulation of the non-native substrate proteins and provides a physical environment optimized to promote and accelerate protein folding. The sequence is that of Chaperonin GroEL 2 from Trichodesmium erythraeum (strain IMS101).